The following is a 147-amino-acid chain: Protein SOB FIVE-LIKE 2 (147 aa).

The SOFL-A motif lies at 18 to 23; it reads SGWTMY. Residues 32–147 form a disordered region; sequence HHSEVVYEEE…ASRVKVSKTK (116 aa). Acidic residues predominate over residues 37–77; it reads VYEEEDDGFSVKEVDDDGDGDEDDDDDDDDDSSNNESDDSM. The SOFL-B signature appears at 76–85; sequence SMTSDASSWP. Residues 78 to 93 show a composition bias toward polar residues; that stretch reads TSDASSWPSTHQPPRS. Residues 96–106 show a composition bias toward low complexity; sequence NHAAAKNSNAK. Over residues 114-131 the composition is skewed to basic and acidic residues; the sequence is NRVRDRFSDEGEESELKA.

The protein belongs to the SOFL plant protein family. Predominantly expressed in the vascular tissues of seedlings, developing leaves, flowers and siliques, but barely detectable in roots and stems.

It localises to the cytoplasm. The protein resides in the nucleus. Involved in cytokinin-mediated development. Together with SOFL2, triggers the endogenous content of specific bioactive cytokinins derived from the biosynthetic intermediates trans-zeatin riboside monophosphate (tZRMP) and N(6)-(Delta(2)-isopentenyl)adenosine monophosphate (iPRMP) such as N-glucosides trans-zeatin 7-glucoside (tZ7G), cis-zeatin 7-glucoside (cZ7G) and N(6)-(Delta(2)-isopentenyl)adenine 7-glucoside (iP7G). This chain is Protein SOB FIVE-LIKE 2, found in Arabidopsis thaliana (Mouse-ear cress).